Here is a 141-residue protein sequence, read N- to C-terminus: MARPLCTLLLLMATLAGALASSSKEENRIIPGGIYDADLNDEWVQRALHFAISEYNKATEDEYYRRPLQVLRAREQTFGGVNYFFDVEVGRTICTKSQPNLDTCAFHEQPELQKKQLCSFEIYEVPWEDRMSLVNSRCQEA.

Positions 1-20 (MARPLCTLLLLMATLAGALA) are cleaved as a signal peptide. 2 positions are modified to phosphoserine: Ser-21 and Ser-23. The Secondary area of contact signature appears at 76 to 80 (QTFGG). 2 disulfide bridges follow: Cys-94-Cys-104 and Cys-118-Cys-138.

Belongs to the cystatin family. Phosphorylated at both its N- and C-terminal regions. Expressed in submandibular and sublingual saliva but not in parotid saliva (at protein level). Expressed in saliva, tears, urine and seminal fluid.

Its subcellular location is the secreted. This protein strongly inhibits papain and ficin, partially inhibits stem bromelain and bovine cathepsin C, but does not inhibit porcine cathepsin B or clostripain. Papain is inhibited non-competitively. This is Cystatin-S (CST4) from Homo sapiens (Human).